Reading from the N-terminus, the 297-residue chain is 4-diphosphocytidyl-2-C-methyl-D-erythritol kinase (297 aa).

Lys19 is a catalytic residue. Pro105–Ala115 serves as a coordination point for ATP. Asp147 is an active-site residue.

This sequence belongs to the GHMP kinase family. IspE subfamily.

The enzyme catalyses 4-CDP-2-C-methyl-D-erythritol + ATP = 4-CDP-2-C-methyl-D-erythritol 2-phosphate + ADP + H(+). Its pathway is isoprenoid biosynthesis; isopentenyl diphosphate biosynthesis via DXP pathway; isopentenyl diphosphate from 1-deoxy-D-xylulose 5-phosphate: step 3/6. Functionally, catalyzes the phosphorylation of the position 2 hydroxy group of 4-diphosphocytidyl-2C-methyl-D-erythritol. The protein is 4-diphosphocytidyl-2-C-methyl-D-erythritol kinase of Rhizobium etli (strain CIAT 652).